We begin with the raw amino-acid sequence, 336 residues long: DNA-directed RNA polymerase subunit alpha (336 aa).

The tract at residues Met-1–Pro-235 is alpha N-terminal domain (alpha-NTD). An alpha C-terminal domain (alpha-CTD) region spans residues Arg-264–Glu-336.

This sequence belongs to the RNA polymerase alpha chain family. Homodimer. The RNAP catalytic core consists of 2 alpha, 1 beta, 1 beta' and 1 omega subunit. When a sigma factor is associated with the core the holoenzyme is formed, which can initiate transcription.

It carries out the reaction RNA(n) + a ribonucleoside 5'-triphosphate = RNA(n+1) + diphosphate. Its function is as follows. DNA-dependent RNA polymerase catalyzes the transcription of DNA into RNA using the four ribonucleoside triphosphates as substrates. The polypeptide is DNA-directed RNA polymerase subunit alpha (Thermotoga maritima (strain ATCC 43589 / DSM 3109 / JCM 10099 / NBRC 100826 / MSB8)).